Reading from the N-terminus, the 102-residue chain is Beta-defensin 116 (102 aa).

An N-terminal signal peptide occupies residues 1 to 23 (MSVMKPCLMTIAILMILAQKTPG). Cystine bridges form between Cys-40–Cys-67, Cys-47–Cys-61, and Cys-51–Cys-68. The disordered stretch occupies residues 83 to 102 (EDYDSNSNLSVTNSSSYSHI). Residues 87–102 (SNSNLSVTNSSSYSHI) are compositionally biased toward low complexity.

Belongs to the beta-defensin family.

It is found in the secreted. In terms of biological role, has antibacterial activity. This chain is Beta-defensin 116 (DEFB116), found in Homo sapiens (Human).